The chain runs to 25 residues: Gastrin-releasing peptide (25 aa).

Met-25 bears the Methionine amide mark.

Belongs to the bombesin/neuromedin-B/ranatensin family.

It is found in the secreted. Its subcellular location is the cytoplasmic vesicle. The protein resides in the secretory vesicle lumen. In terms of biological role, stimulates the release of gastrin and other gastrointestinal hormones. This is Gastrin-releasing peptide (grp) from Scyliorhinus canicula (Small-spotted catshark).